Reading from the N-terminus, the 429-residue chain is Glutamate-1-semialdehyde 2,1-aminomutase (429 aa).

Lysine 270 is modified (N6-(pyridoxal phosphate)lysine).

It belongs to the class-III pyridoxal-phosphate-dependent aminotransferase family. HemL subfamily. Homodimer. Pyridoxal 5'-phosphate is required as a cofactor.

The protein localises to the cytoplasm. It carries out the reaction (S)-4-amino-5-oxopentanoate = 5-aminolevulinate. It functions in the pathway porphyrin-containing compound metabolism; protoporphyrin-IX biosynthesis; 5-aminolevulinate from L-glutamyl-tRNA(Glu): step 2/2. This is Glutamate-1-semialdehyde 2,1-aminomutase from Cupriavidus pinatubonensis (strain JMP 134 / LMG 1197) (Cupriavidus necator (strain JMP 134)).